A 477-amino-acid polypeptide reads, in one-letter code: Glycogen synthase (477 aa).

An ADP-alpha-D-glucose-binding site is contributed by lysine 15.

Belongs to the glycosyltransferase 1 family. Bacterial/plant glycogen synthase subfamily.

It catalyses the reaction [(1-&gt;4)-alpha-D-glucosyl](n) + ADP-alpha-D-glucose = [(1-&gt;4)-alpha-D-glucosyl](n+1) + ADP + H(+). The protein operates within glycan biosynthesis; glycogen biosynthesis. Functionally, synthesizes alpha-1,4-glucan chains using ADP-glucose. In Streptococcus pneumoniae (strain 70585), this protein is Glycogen synthase.